A 175-amino-acid polypeptide reads, in one-letter code: Dual-action ribosomal maturation protein DarP (175 aa).

The protein belongs to the DarP family.

The protein localises to the cytoplasm. Its function is as follows. Member of a network of 50S ribosomal subunit biogenesis factors which assembles along the 30S-50S interface, preventing incorrect 23S rRNA structures from forming. Promotes peptidyl transferase center (PTC) maturation. This is Dual-action ribosomal maturation protein DarP from Vibrio parahaemolyticus serotype O3:K6 (strain RIMD 2210633).